A 244-amino-acid polypeptide reads, in one-letter code: Flagellar L-ring protein (244 aa).

An N-terminal signal peptide occupies residues 1–18 (MNMRVFIFLIFAAASVSA). A lipid anchor (N-palmitoyl cysteine) is attached at Cys19. Cys19 carries the S-diacylglycerol cysteine lipid modification.

This sequence belongs to the FlgH family. As to quaternary structure, the basal body constitutes a major portion of the flagellar organelle and consists of four rings (L,P,S, and M) mounted on a central rod.

The protein resides in the cell outer membrane. It localises to the bacterial flagellum basal body. In terms of biological role, assembles around the rod to form the L-ring and probably protects the motor/basal body from shearing forces during rotation. The sequence is that of Flagellar L-ring protein from Jannaschia sp. (strain CCS1).